Here is a 630-residue protein sequence, read N- to C-terminus: MDSDAAPSVTPGAVAFVLENASPDAATGVPVPEIVLQVVDLKPIGTRFTFLASDGKDKIKTMLLTQLAPEVRSGNIQNLGVIRVLDYTCNTIGEKQEKVLIITKLEVVFKALDSEIKCEAEKQEEKPAILLSPKEESVVLSKPTNAPPLPPVVLKPKQEVKSASQIVNEQRGNAAPAARLAMTRRVHPLISLNPYQGNWIIKVRVTSKGNLRTYKNARGEGCVFNVELTDVDGTQIQATMFNEAAKKFYPMFELGKVYYISKGSLRVANKQFKTVHNDYEMTLNENAVVEEAEGETFIPQIQYNFVKIDQLGPYVGGRELVDVIGVVQSVSPTLSVRRKIDNETIPKRDIVVADDSSKTVTISLWNDLATTTGQELLDMVDSAPIIAIKSLKVSDFQGLSLSTVGRSTIVVNPDLPEAEQLRAWYDSEGKGTSMASIGSDMGASRVGGARSMYSDRVFLSHITSDPNLGQDKPVFFSLNAYISLIKPDQTMWYRACKTCNKKVTEAIGSGYWCEGCQKNDAECSLRYIMVIKVSDPTGEAWLSLFNDQAERIVGCSADELDRIRKEEGDDSYLLKLKEATWVPHLFRVSVTQNEYMNEKRQRITVRSEAPVDHAAEAKYMLEEIAKLTGC.

Positions isoleucine 200–threonine 282 form a DNA-binding region, OB. The C4-type zinc finger occupies cysteine 496 to cysteine 516.

This sequence belongs to the replication factor A protein 1 family. In terms of assembly, heterotrimer of RPA1, RPA2 and RPA3 (canonical replication protein A complex). Interacts with RPA2A. As to expression, expressed in root tips, roots, shoot apical meristem (SAM) and young leaves, and at lower levels in mature leaves, flag leaves and ears.

The protein resides in the nucleus. Its function is as follows. Component of the replication protein A complex (RPA) required for DNA recombination, repair and replication. The activity of RPA is mediated by single-stranded DNA binding and protein interactions. Probably involved in repair of double-strand DNA breaks (DSBs) induced by genotoxic stresses. The polypeptide is Replication protein A 70 kDa DNA-binding subunit B (RPA1B) (Oryza sativa subsp. japonica (Rice)).